Consider the following 494-residue polypeptide: MLTSKGQGFLHGGLCLWLCVFTPFFKGCVGCATEERLFHKLFSHYNQFIRPVENVSDPVTVHFEVAITQLANVDEVNQIMETNLWLRHIWNDYKLRWDPMEYDGIETLRIPADKIWKPDIVLYNNAVGDFQVEGKTKALLKYNGMITWTPPAIFKSSCPMDITFFPFDHQNCSLKFGSWTYDKAEIDLLIIGSKVDMNDFWENSEWEIIDASGYKHDIKYNCCEEIYTDITYSFYIRRLPMFYTINLIIPCLFISFLTVLVFYLPSDCGEKVTLCISVLLSLTVFLLVITETIPSTSLVVPLVGEYLLFTMIFVTLSIVVTVFVLNIHYRTPTTHTMPRWVKTVFLKLLPQVLLMRWPLDKTRGTGSDAVPRGLARRPAKGKLASHGEPRHLKECFHCHKSNELATSKRRLSHHPLQWVVENSEHSPEVEDVINSVQFIAENMKSHNETKEVEDDWKYVAMVVDRVFLWVFIIVCVFGTAGLFLQPLLGNTGKS.

The signal sequence occupies residues 1–25; that stretch reads MLTSKGQGFLHGGLCLWLCVFTPFF. Over 26-239 the chain is Extracellular; it reads KGCVGCATEE…ITYSFYIRRL (214 aa). Residues asparagine 54 and asparagine 171 are each glycosylated (N-linked (GlcNAc...) asparagine). Intrachain disulfides connect cysteine 158–cysteine 172 and cysteine 222–cysteine 223. The next 3 helical transmembrane spans lie at 240-264, 272-290, and 306-327; these read PMFY…VFYL, VTLC…LVIT, and YLLF…VLNI. The Cytoplasmic segment spans residues 328 to 465; it reads HYRTPTTHTM…WKYVAMVVDR (138 aa). A Phosphoserine modification is found at serine 401. Residues 466 to 484 traverse the membrane as a helical segment; sequence VFLWVFIIVCVFGTAGLFL.

It belongs to the ligand-gated ion channel (TC 1.A.9) family. Acetylcholine receptor (TC 1.A.9.1) subfamily. Alpha-6/CHRNA6 sub-subfamily. Neuronal AChR is composed of two different types of subunits: alpha and non-alpha (beta). CHRNA6/alpha-6 subunit can be combined to CHRNB2/beta-2, CHRNA4/alpha-4 and CHRNB3/beta-3 to give rise to functional receptors. Heteropentamers containing CHRNB3 have an stoichiometry of (CHRNA6:CHRNB2)2:CHRNB3. Interacts with LYPD6.

The protein resides in the synaptic cell membrane. The enzyme catalyses Ca(2+)(in) = Ca(2+)(out). The catalysed reaction is K(+)(in) = K(+)(out). It catalyses the reaction Na(+)(in) = Na(+)(out). Its activity is regulated as follows. Activated by a myriad of ligands such as acetylcholine, cytisine and nicotine. CHRNA6 nAChR activity is inhibited by the antagonists alpha-conotoxin MII and PIA, a small disulfide-constrained peptides from cone snails. Component of neuronal acetylcholine receptors (nAChRs) that function as pentameric, ligand-gated cation channels with high calcium permeability among other activities. nAChRs are excitatory neurotrasnmitter receptors formed by a collection of nAChR subunits known to mediate synaptic transmission in the nervous system and the neuromuscular junction. Each nAchR subunit confers differential attributes to channel properties, including activation, deactivation and desensitization kinetics, pH sensitivity, cation permeability, and binding to allosteric modulators. CHRNA6 forms pentameric channels with CHRNB2, CHRNB3 and CHRNA4 that exhibit high sensitivity to ACh and nicotine and are predominantly expressed in only a few brain areas, including dopaminergic neurons, norepirephrine neurons and cells of the visual system. nAChrs containing CHRNA6 subunits mediate endogenous cholinergic modulation of dopamine and gamma-aminobutyric acid (GABA) release in response to nicotine at nerve terminals. The sequence is that of Neuronal acetylcholine receptor subunit alpha-6 (CHRNA6) from Pan troglodytes (Chimpanzee).